The sequence spans 1154 residues: FERM domain-containing protein A (1154 aa).

5 disordered regions span residues 122–149, 432–468, 715–734, 771–794, and 961–980; these read NNNSSIITTTTTTTNNNNNSNCGSSSSS, NLSSSGGSGNGSGSGNGSSSSSSNSSSGNNNNHNHHN, NKNNNNNNNSNNSSTSSSSS, SNSNSNILNNSNDEQSTSTSTSSS, and TNGSSSSSSNNNGGNSNNGI. 2 FERM domains span residues 218 to 547 and 666 to 1103; these read PLHQ…PSIQ and REIV…QTKL. The segment covering 437–447 has biased composition (gly residues); sequence GGSGNGSGSGN. Over residues 448-463 the composition is skewed to low complexity; that stretch reads GSSSSSSNSSSGNNNN.

In terms of biological role, key regulator of adhesion dynamics, it acts as an anti-adhesive. Plays a critical role in the regulation of cell-cell adhesion, multi-cellular development and, in particular, the formation of the organising center known as the tip. Required for turnover of paxillin-adhesion sites during cell migration. Plays a major role in normal cell shape, cell-substrate adhesion and actin cytoskeleton organization. This chain is FERM domain-containing protein A (frmA), found in Dictyostelium discoideum (Social amoeba).